The following is a 207-amino-acid chain: MTIRYPNGQVYRQPGPTKSKSSKFANVNFGDRGMSLEQEINDSNAYYLENNIAVIHKKPTPIQIVKVDYPKRSAAVIREAYFKQASTTDYNGVYRGKYLDFEAKETKNKTAFPLKNFHEHQIKHMRQCLAQSGICFVIIRFASLGRLFLLTASDLFTYWDHQGDGGRKSIPLTDIEHLAAELHYQINPRIPYLDALDHIIDETSSIH.

The interval 1-21 (MTIRYPNGQVYRQPGPTKSKS) is disordered. Thr87, Asp89, Glu102, and Gln121 together coordinate Mg(2+).

It belongs to the RecU family. It depends on Mg(2+) as a cofactor.

It is found in the cytoplasm. It catalyses the reaction Endonucleolytic cleavage at a junction such as a reciprocal single-stranded crossover between two homologous DNA duplexes (Holliday junction).. Its function is as follows. Endonuclease that resolves Holliday junction intermediates in genetic recombination. Cleaves mobile four-strand junctions by introducing symmetrical nicks in paired strands. Promotes annealing of linear ssDNA with homologous dsDNA. Required for DNA repair, homologous recombination and chromosome segregation. The protein is Holliday junction resolvase RecU of Lactiplantibacillus plantarum (strain ATCC BAA-793 / NCIMB 8826 / WCFS1) (Lactobacillus plantarum).